The primary structure comprises 432 residues: DEAD-box ATP-dependent RNA helicase 56 (432 aa).

A coiled-coil region spans residues 1–28 (MAEAEVKDNEVYEEDLVDYEEEVENGTD). The Q motif signature appears at 51 to 79 (SGFRDFLLKPELLRAIQDCGFEHPSEVQH). The Helicase ATP-binding domain maps to 82 to 255 (IPQAILGMDV…KKFMQDPMEI (174 aa)). Residue 95–102 (AKSGMGKT) participates in ATP binding. The short motif at 202 to 205 (DECD) is the DEAD box element. The Helicase C-terminal domain occupies 283-428 (KLNDLLDALD…ELPEQIDTST (146 aa)).

This sequence belongs to the DEAD box helicase family. DECD subfamily. In terms of assembly, homodimer and heterodimer with AIP2. Interacts with API5.

It is found in the nucleus. It carries out the reaction ATP + H2O = ADP + phosphate + H(+). ATP-binding RNA helicase involved in pre-mRNA splicing. Required for the export of mRNA out of the nucleus. Required for tapetal programmed cell death (PCD) and degeneration during anther development. Forms dimer with AIP2 and binds the promoter region of the cysteine protease CP1. Can complement the yeast RNA helicase SUB2. Plants silencing AIP1 and AIP2 are male sterile. This chain is DEAD-box ATP-dependent RNA helicase 56, found in Oryza sativa subsp. japonica (Rice).